The primary structure comprises 177 residues: MSRVGKLPITIPEGIKIGLNDLEVKISGPKGELSKTFKGNIAISLAENKLLVKPLAANKNARAMWGTARSIISNMVTGVKEGFKLKLEINGVGYRAMVKGKYLNLMLAKSHNTKIEIPSDIKIEVPKQNIIILEGTDKEKLGQFASIIIKQRPPEPYKGKGIKFENQFIPRKEGKKN.

It belongs to the universal ribosomal protein uL6 family. In terms of assembly, part of the 50S ribosomal subunit.

Its function is as follows. This protein binds to the 23S rRNA, and is important in its secondary structure. It is located near the subunit interface in the base of the L7/L12 stalk, and near the tRNA binding site of the peptidyltransferase center. This chain is Large ribosomal subunit protein uL6, found in Rickettsia africae (strain ESF-5).